The primary structure comprises 230 residues: Cytidylate kinase (230 aa).

Residue 12–20 participates in ATP binding; the sequence is GPSGAGKGT.

It belongs to the cytidylate kinase family. Type 1 subfamily.

The protein resides in the cytoplasm. The enzyme catalyses CMP + ATP = CDP + ADP. The catalysed reaction is dCMP + ATP = dCDP + ADP. The polypeptide is Cytidylate kinase (Shewanella baltica (strain OS223)).